Reading from the N-terminus, the 381-residue chain is Protein kinase gsk31 (381 aa).

In terms of domain architecture, Protein kinase spans Tyr-25–Phe-309. Residues Leu-31–Val-39 and Lys-54 contribute to the ATP site. Asp-150 serves as the catalytic Proton acceptor. Residue Ser-184 is modified to Phosphoserine. A Phosphotyrosine modification is found at Tyr-185.

Belongs to the protein kinase superfamily. CMGC Ser/Thr protein kinase family. GSK-3 subfamily.

The enzyme catalyses L-seryl-[protein] + ATP = O-phospho-L-seryl-[protein] + ADP + H(+). It carries out the reaction L-threonyl-[protein] + ATP = O-phospho-L-threonyl-[protein] + ADP + H(+). The protein is Protein kinase gsk31 (gsk31) of Schizosaccharomyces pombe (strain 972 / ATCC 24843) (Fission yeast).